A 708-amino-acid chain; its full sequence is Large T antigen (708 aa).

Residue methionine 1 is modified to N-acetylmethionine; by host. The J domain maps to 12 to 75 (QLMDLLGLER…VKYAHQPDFG (64 aa)). The binding of LT to the CUL7 complex stretch occupies residues 63–89 (EDGVKYAHQPDFGGFWDATEIPTYGTD). Residues 103–107 (LFCSE) carry the LXCXE motif motif. Phosphoserine; by host occurs at positions 106, 112, 120, and 123. The segment at 109–134 (MPSSDDEATADSQHSTPPKKKRKVED) is disordered. Position 124 is a phosphothreonine; by host (threonine 124). The short motif at 125–132 (PPKKKRKV) is the Nuclear localization signal element. The segment at residues 139 to 254 (PSELLSFLSH…EESLPGGLKE (116 aa)) is a DNA-binding region (T-ag OBD). Residues 265–357 (TKQVSWKLVT…KRVDSLQLTR (93 aa)) form a T-ag D1-type zinc finger. Zn(2+) contacts are provided by cysteine 302, cysteine 305, histidine 313, and histidine 317. The binding to host TP53 protein stretch occupies residues 337–672 (CQQAVDTVLA…IDSQSQGSFQ (336 aa)). The region spanning 400–560 (KMDSVVYDFL…DYLKHCLERS (161 aa)) is the SF3 helicase domain. Residues 418–616 (KKRYWLFKGP…FSLSVYQKMK (199 aa)) form an ATPase activity region. 426–433 (GPIDSGKT) serves as a coordination point for ATP. The tract at residues 627-708 (DWLRNSDDDD…PPTPPPEPET (82 aa)) is C-terminal region. Positions 630-685 (RNSDDDDEDSQENADKNEDGGEKNMEDSGHETGIDSQSQGSFQAPQSSQSVHDHNQ) are disordered. A Phosphoserine; by host modification is found at serine 639. Basic and acidic residues predominate over residues 642 to 662 (NADKNEDGGEKNMEDSGHETG). Residues 663 to 679 (IDSQSQGSFQAPQSSQS) show a composition bias toward polar residues. Serine 676, serine 677, and serine 679 each carry phosphoserine; by host. Lysine 697 is modified (N6-acetyllysine; by host). Residues 699–708 (PPTPPPEPET) are CPD. Threonine 701 carries the phosphothreonine; by host modification.

In terms of assembly, isoform large T antigen forms homohexamers in the presence of ATP. Interacts with host HDAC1. Interacts (via LXCXE domain) with host RB1; the interaction induces the aberrant dissociation of RB1-E2F1 complex thereby disrupting RB1's activity. Interacts (via LXCXE domain) with host pRB-related proteins RBL1 and RBL2. Interacts (via C-terminus) with host TOP1 and POLA1 allowing DNA replication. Interacts with host TP53, inhibiting TP53 binding to DNA. Interacts with host preinitiation complex components TBP, TFIIA and TFIID to regulate transcription initiation. LT interacts (via CPD region) with host FBW7gamma isoform (via WD repeats); seems to function as a competitive inhibitor of FBW7gamma function for physiologic substrates. LT interacts with host E3 ubiquitin ligase CUL7; this interaction seems to inhibit CUL7. Component of a SCF(CUL7)-like complex composed of SV40 Lt and host proteins CUL7, SKP1, RBX1, and FBXW8. LT interacts with host BUB1; this interaction induces activation of a DNA damage response and promotes p53 stabilization and phosphorylation. Interacts with host FAM111A and this interaction is required for efficient viral replication and sustained viral gene expression in restrictive cell types. Mg(2+) is required as a cofactor. Post-translationally, phosphorylated on both serine and threonine residues. Phosphorylation on Ser-120 and Ser-123 inhibits viral replication, while phosphorylation on Thr-124 enhances replication by activating the DNA-binding domain. Phosphorylation on Thr-701 is required for binding to host FBW7gamma isoform. Dephosphorylated preferentially by PP2A on Ser-120, Ser-123, Ser-677 and perhaps Ser-679. Small t antigen inhibits the dephosphorylation by the AC form of PP2A. In terms of processing, O-Glycosylated near the C-terminal region. Acetylated by CBP in a TP53-dependent manner.

Its subcellular location is the host nucleus. The enzyme catalyses Couples ATP hydrolysis with the unwinding of duplex DNA by translocating in the 3'-5' direction.. The catalysed reaction is ATP + H2O = ADP + phosphate + H(+). DNA helicase activity is inhibited by ATP-gamma-S. Functionally, isoform large T antigen is a key early protein essential for both driving viral replication and inducing cellular transformation. Plays a role in viral genome replication by driving entry of quiescent cells into the cell cycle and by autoregulating the synthesis of viral early mRNA. Displays highly oncogenic activities by corrupting the host cellular checkpoint mechanisms that guard cell division and the transcription, replication, and repair of DNA. Participates in the modulation of cellular gene expression preceeding viral DNA replication. This step involves binding to host key cell cycle regulators retinoblastoma protein RB1/pRb and TP53. Induces the disassembly of host E2F1 transcription factors from RB1, thus promoting transcriptional activation of E2F1-regulated S-phase genes. Inhibits host TP53 binding to DNA, abrogating the ability of TP53 to stimulate gene expression. Plays the role of a TFIID-associated factor (TAF) in transcription initiation for all three RNA polymerases, by stabilizing the TBP-TFIIA complex on promoters. Initiates viral DNA replication and unwinding via interactions with the viral origin of replication. Binds two adjacent sites in the SV40 origin. The replication fork movement is facilitated by Large T antigen helicase activity. Has processive 3'-5' DNA helicase activity which requires a short 3' single-stranded region and ATP; other (d)NTPs can partially replace ATP. Activates the transcription of viral late mRNA, through host TBP and TFIIA stabilization. Interferes with histone deacetylation mediated by HDAC1, leading to activation of transcription. May inactivate the growth-suppressing properties of the E3 ubiquitin ligase CUL7. Its function is as follows. Isoform 17kT antigen targets host RBL2 for degradation and promotes cell proliferation. Transactivates host cyclin A promoter through its J domain. Unwinds G4 DNA (planar arrays of 4 guanine bases stabilized by hydrogen bonds, parallel and antiparallel arrays were tested); unwinding occurs in the 3'-5' direction, requires a 3' single-stranded end and hydrolyzable ATP. This is Large T antigen from Macaca (macaques).